Reading from the N-terminus, the 361-residue chain is MSDIERLEQEICLALEMAGDEQALEAVRIAALGKKGSISEKLKALGKMSASERQKVGPVLNGLKNRVLELWTQKRDFLRRQAMDACLTRETVDITLPVRSSPIERGRIHPISQVIEEIIAIYMKMGFSLAEGPDIETDYYNFTALNFPEGHPAREMHDTFFFDVNKTGERKLLRTHTSPVQIRTMEKQKAPIRIIIPGKTYRMDSDATHSPMFHQVEGLVIDKTSTIAHMMWLHETFCKAFFEVSSVKMRFRPSFFPFTEPSMEVDIQCDRSGSEVKFGEGQDWLEILGCGMVHPHVLKNVGLDPDEYQGFAWGMGIDRIAMLKYGMPDLRAFFDADLRWLDHYGFRCFDMHAFFPGLRNV.

Residue Glu-260 coordinates Mg(2+).

This sequence belongs to the class-II aminoacyl-tRNA synthetase family. Phe-tRNA synthetase alpha subunit type 1 subfamily. As to quaternary structure, tetramer of two alpha and two beta subunits. The cofactor is Mg(2+).

The protein resides in the cytoplasm. It carries out the reaction tRNA(Phe) + L-phenylalanine + ATP = L-phenylalanyl-tRNA(Phe) + AMP + diphosphate + H(+). This chain is Phenylalanine--tRNA ligase alpha subunit, found in Bartonella henselae (strain ATCC 49882 / DSM 28221 / CCUG 30454 / Houston 1) (Rochalimaea henselae).